The primary structure comprises 197 residues: uncharacterized protein (197 aa).

The region spanning 33–184 (MISKIMDASS…IAEFMSILGK (152 aa)) is the SIS domain.

The protein belongs to the SIS family. PHI subfamily.

This is an uncharacterized protein from Methanothermobacter thermautotrophicus (strain ATCC 29096 / DSM 1053 / JCM 10044 / NBRC 100330 / Delta H) (Methanobacterium thermoautotrophicum).